We begin with the raw amino-acid sequence, 562 residues long: Arginine--tRNA ligase (562 aa).

Residues 129–139 carry the 'HIGH' region motif; the sequence is ANPTGPLHVGH.

The protein belongs to the class-I aminoacyl-tRNA synthetase family. In terms of assembly, monomer.

It localises to the cytoplasm. The catalysed reaction is tRNA(Arg) + L-arginine + ATP = L-arginyl-tRNA(Arg) + AMP + diphosphate. In Xanthomonas oryzae pv. oryzae (strain MAFF 311018), this protein is Arginine--tRNA ligase.